The sequence spans 193 residues: Large ribosomal subunit protein eL19B (193 aa).

Residues 157 to 179 (EQQDARRARAKAARQRRAKAVEE) are disordered. Basic residues predominate over residues 164–174 (ARAKAARQRRA).

This sequence belongs to the eukaryotic ribosomal protein eL19 family. In terms of assembly, component of the large ribosomal subunit (LSU). Mature yeast ribosomes consist of a small (40S) and a large (60S) subunit. The 40S small subunit contains 1 molecule of ribosomal RNA (18S rRNA) and at least 33 different proteins. The large 60S subunit contains 3 rRNA molecules (25S, 5.8S and 5S rRNA) and at least 46 different proteins. eL19 lies in close proximity to the binding site for eukaryotic initiation factor eIF4G.

It localises to the cytoplasm. Component of the ribosome, a large ribonucleoprotein complex responsible for the synthesis of proteins in the cell. The small ribosomal subunit (SSU) binds messenger RNAs (mRNAs) and translates the encoded message by selecting cognate aminoacyl-transfer RNA (tRNA) molecules. The large subunit (LSU) contains the ribosomal catalytic site termed the peptidyl transferase center (PTC), which catalyzes the formation of peptide bonds, thereby polymerizing the amino acids delivered by tRNAs into a polypeptide chain. The nascent polypeptides leave the ribosome through a tunnel in the LSU and interact with protein factors that function in enzymatic processing, targeting, and the membrane insertion of nascent chains at the exit of the ribosomal tunnel. eL19 may play a role in the last stages of translation initiation, in particular subunit joining and shedding/releasing factors. This is Large ribosomal subunit protein eL19B (rpl1902) from Schizosaccharomyces pombe (strain 972 / ATCC 24843) (Fission yeast).